We begin with the raw amino-acid sequence, 284 residues long: 2-dehydro-3-deoxyphosphooctonate aldolase (284 aa).

This sequence belongs to the KdsA family.

The protein localises to the cytoplasm. It catalyses the reaction D-arabinose 5-phosphate + phosphoenolpyruvate + H2O = 3-deoxy-alpha-D-manno-2-octulosonate-8-phosphate + phosphate. It participates in carbohydrate biosynthesis; 3-deoxy-D-manno-octulosonate biosynthesis; 3-deoxy-D-manno-octulosonate from D-ribulose 5-phosphate: step 2/3. Its pathway is bacterial outer membrane biogenesis; lipopolysaccharide biosynthesis. The chain is 2-dehydro-3-deoxyphosphooctonate aldolase from Yersinia enterocolitica serotype O:8 / biotype 1B (strain NCTC 13174 / 8081).